The sequence spans 701 residues: Reverse gyrase subunit A (701 aa).

Residues 41 to 197 (MVLFIVESPN…NIYRAEFHEV (157 aa)) enclose the Toprim domain. Glutamate 47 is a Mg(2+) binding site. The RG C-terminal-type zinc-finger motif lies at 117-143 (IKKCLDCGHQFVDEDKCPRCGSENIDD). Zn(2+) contacts are provided by cysteine 120, cysteine 123, cysteine 133, and cysteine 136. Aspartate 166 is a binding site for Mg(2+). Residues 213–602 (NTNRVKAQLV…SFKKELIEIW (390 aa)) form the Topo IA-type catalytic domain. The O-(5'-phospho-DNA)-tyrosine intermediate role is filled by tyrosine 352.

Belongs to the type IA topoisomerase family. In terms of assembly, heterodimer of an RgyA and RgyB subunit. It depends on Zn(2+) as a cofactor. Requires Mg(2+) as cofactor.

The protein localises to the cytoplasm. Modifies the topological state of DNA by introducing positive supercoils in an ATP-dependent process. Binds to single-stranded DNA, transiently cleaves and then rejoins the end, introducing a positive supercoil in the process. The scissile phosphodiester is attacked by the catalytic tyrosine of the enzyme, resulting in the formation of a DNA-(5'-phosphotyrosyl)-enzyme intermediate. Probably involved in rewinding DNA strands in regions of the chromosome that have opened up to allow replication, transcription, DNA repair or for DNA protection. Reconstituted holoenzyme binds dsDNA a bit better than ssDNA, this subunit preferentially binds ssDNA. In isolation this subunit relaxes negatively-supercoiled DNA, and stimulates the endogenous ATPase activity of the RgyB subunit. This chain is Reverse gyrase subunit A, found in Nanoarchaeum equitans (strain Kin4-M).